The primary structure comprises 290 residues: HTH-type transcriptional regulator BudR (290 aa).

The region spanning 1–58 is the HTH lysR-type domain; the sequence is MELRYLRYFVAVAEARNFTRAAHDLGISQPPLSQQIQRLEREIGTPLLRRLTRGVELT. A DNA-binding region (H-T-H motif) is located at residues 18-37; that stretch reads FTRAAHDLGISQPPLSQQIQ.

This sequence belongs to the LysR transcriptional regulatory family.

Functionally, regulator of the budABC operon for 2,3-butanediol synthesis. The chain is HTH-type transcriptional regulator BudR (budR) from Raoultella terrigena (Klebsiella terrigena).